Reading from the N-terminus, the 415-residue chain is MSNINYAPTIWSRADALKVNENDPTTTQPLVSPDFPVMSDTVFIWDTMPLRELDGTVVSVNGWSVIVTLTADRHPDDPQYVGANGRYDIKRDWEDRHGRARMCYWYSRTGKDWIFGGRVMAEGVSPTTREWAGTPVLLNDKGDIDLYYTCVTPGAAIAKVRGRIVTSDKGVELKDFTEVKTLFEADGKYYQTEAQNSTWNFRDPSPFIDPNDGKLYMVFEGNVAGERGTHTVGAAELGPVPPGHEETGGARFQVGCIGLAVAKDLSGDEWEILPPLVTAVGVNDQTERPHYVFQDGKYYLFTISHKFTYADGVTGPDGVYGFVGEHLFGPYRPMNASGLVLGNPPAQPFQTYSHCVMPNGLVTSFIDSVPTSGEDYRIGGTEAPTVRILLEGDRSFVQEVYDYGYIPAMKNVVLS.

Positions 45, 46, 132, 202, and 203 each coordinate sucrose. Asp-46 (nucleophile) is an active-site residue. The active-site Proton donor/acceptor is Glu-287.

It belongs to the glycosyl hydrolase 68 family.

It localises to the periplasm. It carries out the reaction [6)-beta-D-fructofuranosyl-(2-&gt;](n) alpha-D-glucopyranoside + sucrose = [6)-beta-D-fructofuranosyl-(2-&gt;](n+1) alpha-D-glucopyranoside + D-glucose. In terms of biological role, catalyzes the synthesis of levan, a fructose polymer, by transferring the fructosyl moiety from sucrose to a growing acceptor molecule. LscA encodes a functional enzyme in vitro, when expressed in E.coli under control of the vector-based lactose promoter (Plac), and it can restore levan production to the lscB-lscC double mutant. However, lscA is not expressed in P.savastanoi pv. glycinea PG4180 under standard conditions. It could be an ancestral Lsc variant in P.syringae. In Pseudomonas savastanoi pv. glycinea (Pseudomonas syringae pv. glycinea), this protein is Levansucrase LscA.